Consider the following 813-residue polypeptide: LPS-assembly protein LptD (813 aa).

The N-terminal stretch at methionine 1–alanine 22 is a signal peptide.

It belongs to the LptD family. In terms of assembly, component of the lipopolysaccharide transport and assembly complex. Interacts with LptE and LptA.

Its subcellular location is the cell outer membrane. Together with LptE, is involved in the assembly of lipopolysaccharide (LPS) at the surface of the outer membrane. The polypeptide is LPS-assembly protein LptD (Xanthomonas oryzae pv. oryzae (strain KACC10331 / KXO85)).